The primary structure comprises 499 residues: L-arabinose isomerase (499 aa).

Residues E306, E333, H350, and H449 each contribute to the Mn(2+) site.

The protein belongs to the arabinose isomerase family. Requires Mn(2+) as cofactor.

It carries out the reaction beta-L-arabinopyranose = L-ribulose. The protein operates within carbohydrate degradation; L-arabinose degradation via L-ribulose; D-xylulose 5-phosphate from L-arabinose (bacterial route): step 1/3. Its function is as follows. Catalyzes the conversion of L-arabinose to L-ribulose. The polypeptide is L-arabinose isomerase (Tolumonas auensis (strain DSM 9187 / NBRC 110442 / TA 4)).